Here is a 545-residue protein sequence, read N- to C-terminus: CTP synthase (545 aa).

Positions 1 to 266 (MTTNYIFVTG…DDYICKRFSL (266 aa)) are amidoligase domain. Position 14 (S14) interacts with CTP. S14 contributes to the UTP binding site. Residues 15 to 20 (SLGKGI) and D72 contribute to the ATP site. Positions 72 and 140 each coordinate Mg(2+). Residues 147–149 (DIE), 187–192 (KTKPTQ), and K223 each bind CTP. Residues 187–192 (KTKPTQ) and K223 contribute to the UTP site. Residue 239–241 (KDV) participates in ATP binding. The Glutamine amidotransferase type-1 domain maps to 291 to 542 (TIGMIGKYVE…VKAAGEYQKR (252 aa)). Residue G352 coordinates L-glutamine. The Nucleophile; for glutamine hydrolysis role is filled by C379. L-glutamine contacts are provided by residues 380 to 383 (LGMQ), E403, and R470. Residues H515 and E517 contribute to the active site.

It belongs to the CTP synthase family. As to quaternary structure, homotetramer.

It carries out the reaction UTP + L-glutamine + ATP + H2O = CTP + L-glutamate + ADP + phosphate + 2 H(+). The catalysed reaction is L-glutamine + H2O = L-glutamate + NH4(+). The enzyme catalyses UTP + NH4(+) + ATP = CTP + ADP + phosphate + 2 H(+). Its pathway is pyrimidine metabolism; CTP biosynthesis via de novo pathway; CTP from UDP: step 2/2. With respect to regulation, allosterically activated by GTP, when glutamine is the substrate; GTP has no effect on the reaction when ammonia is the substrate. The allosteric effector GTP functions by stabilizing the protein conformation that binds the tetrahedral intermediate(s) formed during glutamine hydrolysis. Inhibited by the product CTP, via allosteric rather than competitive inhibition. Its function is as follows. Catalyzes the ATP-dependent amination of UTP to CTP with either L-glutamine or ammonia as the source of nitrogen. Regulates intracellular CTP levels through interactions with the four ribonucleotide triphosphates. This is CTP synthase from Yersinia enterocolitica serotype O:8 / biotype 1B (strain NCTC 13174 / 8081).